We begin with the raw amino-acid sequence, 239 residues long: Increased recombination centers protein 22-1 (239 aa).

A signal peptide spans 1 to 19 (MKLSTIFTAFAATIATVAG). At 20 to 161 (YETTGSKQTV…AAVSFFDPRL (142 aa)) the chain is on the lumenal side. Residues 162–182 (IFLELVLLITFAGLIYVGYEI) form a helical membrane-spanning segment. Over 183 to 239 (WGKQYFKGVASVKAKKVSAAKASSPVASGPSTTSATGYDTNWIPESHLKQKKTKKVN) the chain is Cytoplasmic. Over residues 201–213 (AAKASSPVASGPS) the composition is skewed to low complexity. The segment at 201 to 222 (AAKASSPVASGPSTTSATGYDT) is disordered.

The protein belongs to the IRC22 family.

The protein localises to the endoplasmic reticulum membrane. In terms of biological role, is probably involved in a pathway contributing to genomic integrity. The protein is Increased recombination centers protein 22-1 (IRC22-1) of Candida albicans (strain WO-1) (Yeast).